The chain runs to 688 residues: Zinc finger and BTB domain-containing protein 48 (688 aa).

Residues 26 to 89 (CDATLDVGGL…FYTGHLALTS (64 aa)) form the BTB domain. Residues 119-140 (SVGQAAGGQSGLGPPASQNVNS) are disordered. Residue K143 forms a Glycyl lysine isopeptide (Lys-Gly) (interchain with G-Cter in SUMO2) linkage. The segment at 161–192 (PRDQEPRGSHSPQRPQLHSPAQSEGPSSLCGK) is disordered. Residues S169, S171, and S179 each carry the phosphoserine modification. The segment covering 170 to 186 (HSPQRPQLHSPAQSEGP) has biased composition (polar residues). K263 participates in a covalent cross-link: Glycyl lysine isopeptide (Lys-Gly) (interchain with G-Cter in SUMO2). The C2H2-type 1 zinc-finger motif lies at 291-313 (VECPTCHKKFLSKYYLKVHNRKH). The Zn(2+) site is built by C293, C296, H309, H313, C321, C324, H337, C342, C352, C355, H368, H372, C380, C383, H396, and H401. The CCHC-type zinc-finger motif lies at 319–344 (FECPKCGKCYFRKENLLEHEARNCMN). 9 C2H2-type zinc fingers span residues 350–372 (FTCS…MVSH), 378–401 (YKCS…IKLH), 407–430 (HACP…AFKH), 436–459 (FVCE…KAKH), 465–487 (HVCE…LRTH), 493–515 (FQCH…NRTH), 521–544 (FSCE…ASRH), 550–572 (HFCQ…VRRH), and 578–600 (FECT…MEIH). C552, C555, H568, C580, C583, H596, and H600 together coordinate Zn(2+).

The protein belongs to the krueppel C2H2-type zinc-finger protein family. As to quaternary structure, interacts with EP300. As to expression, detected in adrenal gland and neuroblastoma.

Its subcellular location is the nucleus. It is found in the chromosome. The protein localises to the telomere. Plays a critical role in transcriptional regulation and chromatin remodeling. Acts as a regulator of telomere length. Directly binds the telomeric double-stranded 5'-TTAGGG-3' repeat. Preferentially binds to telomeres that have a low concentration of shelterin complex and acts as a regulator of telomere length by initiating telomere trimming, a process that prevents the accumulation of aberrantly long telomeres. Also acts as a transcription regulator that binds to promoter regions. Regulates expression of a small subset of genes, including MTFP1. Acts as a negative regulator of cell proliferation by specifically activating expression of ARF, a tumor suppressor isoform of CDKN2A. Acts as a transcription regulator of CIITA, the major factor regulating MHC class II gene expression. In addition, regulates cellular m6A/m6Am methylation on RNA by facilitating the recruitment of the RNA demethylase, FTO, to target mRNAs. This Homo sapiens (Human) protein is Zinc finger and BTB domain-containing protein 48.